Consider the following 215-residue polypeptide: High frequency lysogenization protein HflD homolog (215 aa).

It belongs to the HflD family.

It is found in the cytoplasm. It localises to the cell inner membrane. This chain is High frequency lysogenization protein HflD homolog, found in Haemophilus ducreyi (strain 35000HP / ATCC 700724).